We begin with the raw amino-acid sequence, 348 residues long: Dihydroorotase (348 aa).

H17 and H19 together coordinate Zn(2+). Substrate is bound by residues 19–21 and N45; that span reads HLR. Residues K103, H140, and H178 each contribute to the Zn(2+) site. K103 is subject to N6-carboxylysine. H140 serves as a coordination point for substrate. Position 223 (L223) interacts with substrate. Position 251 (D251) interacts with Zn(2+). D251 is a catalytic residue. The substrate site is built by H255 and A267.

Belongs to the metallo-dependent hydrolases superfamily. DHOase family. Class II DHOase subfamily. As to quaternary structure, homodimer. Requires Zn(2+) as cofactor.

It carries out the reaction (S)-dihydroorotate + H2O = N-carbamoyl-L-aspartate + H(+). It participates in pyrimidine metabolism; UMP biosynthesis via de novo pathway; (S)-dihydroorotate from bicarbonate: step 3/3. Its function is as follows. Catalyzes the reversible cyclization of carbamoyl aspartate to dihydroorotate. This chain is Dihydroorotase, found in Escherichia coli O157:H7.